The chain runs to 520 residues: CBL-interacting serine/threonine-protein kinase 18 (520 aa).

Disordered regions lie at residues 1 to 29 and 48 to 67; these read MAQALAQPPLVVTTVVPDPPPPPPPPHPK and TDKDGNISPQSPRSPRSPRN. Residues 17-29 show a composition bias toward pro residues; it reads PDPPPPPPPPHPK. Over residues 55–66 the composition is skewed to low complexity; it reads SPQSPRSPRSPR. Residues 74–328 enclose the Protein kinase domain; the sequence is YELGKLLGHG…IPEIMKNRWF (255 aa). ATP contacts are provided by residues 80-88 and K103; that span reads LGHGTFAKV. The Proton acceptor role is filled by D196. The tract at residues 214–243 is activation loop; sequence DFGLSAVAEQLRQDGLCHTFCGTPAYIAPE. S218 is modified (phosphoserine). The residue at position 232 (T232) is a Phosphothreonine. Positions 349–368 are disordered; sequence EDEEEEASSSGRSSTVSESD. The segment covering 356–366 has biased composition (low complexity); that stretch reads SSSGRSSTVSE. In terms of domain architecture, NAF spans 382–406; it reads PRPSSLNAFDIISFSSGFDLSGLFE. Positions 410–439 are PPI; the sequence is GEGTRFVSGAPVSKIISKLEEIAKIVSFTV.

Belongs to the protein kinase superfamily. CAMK Ser/Thr protein kinase family. SNF1 subfamily. Interacts with CBL1 and CBL9. Mn(2+) serves as cofactor.

It carries out the reaction L-seryl-[protein] + ATP = O-phospho-L-seryl-[protein] + ADP + H(+). The enzyme catalyses L-threonyl-[protein] + ATP = O-phospho-L-threonyl-[protein] + ADP + H(+). Its function is as follows. CIPK serine-threonine protein kinases interact with CBL proteins. Binding of a CBL protein to the regulatory NAF domain of CIPK protein lead to the activation of the kinase in a calcium-dependent manner. This Arabidopsis thaliana (Mouse-ear cress) protein is CBL-interacting serine/threonine-protein kinase 18 (CIPK18).